The sequence spans 236 residues: MSEAKNLFINGLWKNNSALVQLLGLCPLLAVSSTATNALGLGLATTLVLVLTNSAVSALRRWVPGEIRIPIYVMIIASVVSAVQMLINAYAFGLYQSLGIFIPLIVTNCIVIGRAEAYAAHHPVGMAALDGLATGLGATAALFVLGALREILGNGTLFDGADLLLGHWARALRIELFHTDTPFLLAILPPGAFLGLGFMLAFKYVIEQKRRQRQAQRSAVGQALRGAAPTDNHEQA.

6 consecutive transmembrane segments (helical) span residues 18–38 (ALVQLLGLCPLLAVSSTATNA), 39–59 (LGLGLATTLVLVLTNSAVSAL), 69–89 (IPIYVMIIASVVSAVQMLINA), 92–112 (FGLYQSLGIFIPLIVTNCIVI), 128–148 (ALDGLATGLGATAALFVLGAL), and 182–202 (PFLLAILPPGAFLGLGFMLAF). Positions 217–236 (RSAVGQALRGAAPTDNHEQA) are disordered.

The protein belongs to the NqrDE/RnfAE family. The complex is composed of six subunits: RnfA, RnfB, RnfC, RnfD, RnfE and RnfG.

The protein resides in the cell inner membrane. In terms of biological role, part of a membrane-bound complex that couples electron transfer with translocation of ions across the membrane. The sequence is that of Ion-translocating oxidoreductase complex subunit E from Edwardsiella ictaluri (strain 93-146).